The chain runs to 339 residues: Glycerol-3-phosphate dehydrogenase [NAD(P)+] (339 aa).

The NADPH site is built by Ser11, Trp12, and Lys109. Sn-glycerol 3-phosphate contacts are provided by Lys109, Gly140, and Ser142. NADPH is bound at residue Ala144. The sn-glycerol 3-phosphate site is built by Lys195, Asp249, Ser259, Arg260, and Asn261. The Proton acceptor role is filled by Lys195. NADPH is bound at residue Arg260. The NADPH site is built by Val284 and Glu286.

It belongs to the NAD-dependent glycerol-3-phosphate dehydrogenase family.

Its subcellular location is the cytoplasm. The enzyme catalyses sn-glycerol 3-phosphate + NAD(+) = dihydroxyacetone phosphate + NADH + H(+). It carries out the reaction sn-glycerol 3-phosphate + NADP(+) = dihydroxyacetone phosphate + NADPH + H(+). It participates in membrane lipid metabolism; glycerophospholipid metabolism. Its function is as follows. Catalyzes the reduction of the glycolytic intermediate dihydroxyacetone phosphate (DHAP) to sn-glycerol 3-phosphate (G3P), the key precursor for phospholipid synthesis. This chain is Glycerol-3-phosphate dehydrogenase [NAD(P)+], found in Lactobacillus acidophilus (strain ATCC 700396 / NCK56 / N2 / NCFM).